The primary structure comprises 288 residues: Chitinase 5 (288 aa).

The first 29 residues, 1-29, serve as a signal peptide directing secretion; that stretch reads MANSPTPTMLAFLALGLALLLSATGQASA. Residues 30-64 enclose the Chitin-binding type-1 domain; it reads QNCGCQSNMCCSKWGYCGTGKDYCGDGCRSGPCYG. 7 disulfides stabilise this stretch: Cys32–Cys40, Cys34–Cys46, Cys39–Cys53, Cys57–Cys62, Cys107–Cys156, Cys169–Cys178, and Cys256–Cys288. Glu151 serves as the catalytic Proton donor.

The protein belongs to the glycosyl hydrolase 19 family. Chitinase class IV subfamily. As to expression, expressed in sheaths and meristems and at lower levels in roots and leaves.

The catalysed reaction is Random endo-hydrolysis of N-acetyl-beta-D-glucosaminide (1-&gt;4)-beta-linkages in chitin and chitodextrins.. Functionally, may function in reproductive organs during embryogenesis and seed maturation. The chain is Chitinase 5 (Cht5) from Oryza sativa subsp. japonica (Rice).